Reading from the N-terminus, the 241-residue chain is 1-(5-phosphoribosyl)-5-[(5-phosphoribosylamino)methylideneamino] imidazole-4-carboxamide isomerase (241 aa).

The Proton acceptor role is filled by Asp8. Catalysis depends on Asp130, which acts as the Proton donor.

Belongs to the HisA/HisF family.

Its subcellular location is the cytoplasm. The enzyme catalyses 1-(5-phospho-beta-D-ribosyl)-5-[(5-phospho-beta-D-ribosylamino)methylideneamino]imidazole-4-carboxamide = 5-[(5-phospho-1-deoxy-D-ribulos-1-ylimino)methylamino]-1-(5-phospho-beta-D-ribosyl)imidazole-4-carboxamide. It functions in the pathway amino-acid biosynthesis; L-histidine biosynthesis; L-histidine from 5-phospho-alpha-D-ribose 1-diphosphate: step 4/9. The protein is 1-(5-phosphoribosyl)-5-[(5-phosphoribosylamino)methylideneamino] imidazole-4-carboxamide isomerase of Flavobacterium psychrophilum (strain ATCC 49511 / DSM 21280 / CIP 103535 / JIP02/86).